A 351-amino-acid chain; its full sequence is 1-aminocyclopropane-1-carboxylate oxidase homolog 4 (351 aa).

The region spanning Lys-200 to Ala-304 is the Fe2OG dioxygenase domain. Positions 224, 226, and 280 each coordinate Fe cation. Position 291 (Arg-291) interacts with 2-oxoglutarate.

The protein belongs to the iron/ascorbate-dependent oxidoreductase family. Requires Fe(2+) as cofactor.

This Arabidopsis thaliana (Mouse-ear cress) protein is 1-aminocyclopropane-1-carboxylate oxidase homolog 4.